Consider the following 95-residue polypeptide: MNDVLNSGAFSLASLIVSMVVLVVGLALWFFVNRASSRANEQIELLEALLDQQKRQNALLRRLCEANEPEKEAEPATAASEPKEDEDIIRLVAER.

A helical transmembrane segment spans residues 12-32 (LASLIVSMVVLVVGLALWFFV). The interval 66-87 (ANEPEKEAEPATAASEPKEDED) is disordered.

Its subcellular location is the cell membrane. This is an uncharacterized protein from Salmonella typhi.